We begin with the raw amino-acid sequence, 346 residues long: Dihydroorotate dehydrogenase (quinone) (346 aa).

FMN is bound by residues 62–66 (AGMDK) and Thr-86. Lys-66 contacts substrate. 111-115 (NRMGF) lines the substrate pocket. 2 residues coordinate FMN: Asn-142 and Asn-175. Asn-175 is a substrate binding site. The Nucleophile role is filled by Ser-178. Asn-180 is a binding site for substrate. Residues Lys-211 and Val-239 each coordinate FMN. 240–241 (NT) serves as a coordination point for substrate. FMN is bound by residues Gly-261, Gly-289, and 310–311 (YT).

Belongs to the dihydroorotate dehydrogenase family. Type 2 subfamily. In terms of assembly, monomer. Requires FMN as cofactor.

It localises to the cell membrane. The catalysed reaction is (S)-dihydroorotate + a quinone = orotate + a quinol. The protein operates within pyrimidine metabolism; UMP biosynthesis via de novo pathway; orotate from (S)-dihydroorotate (quinone route): step 1/1. In terms of biological role, catalyzes the conversion of dihydroorotate to orotate with quinone as electron acceptor. This is Dihydroorotate dehydrogenase (quinone) from Thermus thermophilus (strain ATCC BAA-163 / DSM 7039 / HB27).